Here is a 339-residue protein sequence, read N- to C-terminus: RNA polymerase principal sigma factor HrdC (339 aa).

Over residues 1–10 the composition is skewed to low complexity; that stretch reads MAPTARTPTA. Disordered regions lie at residues 1-37 and 71-101; these read MAPTARTPTARTRDDRRATTRTARLRTRIPEPDEEPD and REELETADTGEPAPTPRRRRTLEETVHDGQE. The span at 91-101 shows a compositional bias: basic and acidic residues; sequence TLEETVHDGQE. The Polymerase core binding signature appears at 130–143; the sequence is DVIQEGNLGLIRAV. Residues 300–319 constitute a DNA-binding region (H-T-H motif); that stretch reads LQQVAQHVGLTRERVRQLEK.

It belongs to the sigma-70 factor family. As to quaternary structure, interacts transiently with the RNA polymerase catalytic core.

Sigma factors are initiation factors that promote the attachment of RNA polymerase to specific initiation sites and are then released. This Streptomyces coelicolor (strain ATCC BAA-471 / A3(2) / M145) protein is RNA polymerase principal sigma factor HrdC (hrdC).